The following is a 274-amino-acid chain: Large ribosomal subunit protein uL2 (274 aa).

A disordered region spans residues 221–274 (RGTAMNPVDHPHGGGEGRNFGKHPVTPWGVQTKGKKTRSNKRTDKFIVRRRSKK).

The protein belongs to the universal ribosomal protein uL2 family. Part of the 50S ribosomal subunit. Forms a bridge to the 30S subunit in the 70S ribosome.

In terms of biological role, one of the primary rRNA binding proteins. Required for association of the 30S and 50S subunits to form the 70S ribosome, for tRNA binding and peptide bond formation. It has been suggested to have peptidyltransferase activity; this is somewhat controversial. Makes several contacts with the 16S rRNA in the 70S ribosome. The polypeptide is Large ribosomal subunit protein uL2 (Yersinia enterocolitica).